The following is a 348-amino-acid chain: Dihydroorotase (348 aa).

Residues histidine 17 and histidine 19 each contribute to the Zn(2+) site. Residues 19 to 21 and asparagine 45 contribute to the substrate site; that span reads HLR. Residues lysine 103, histidine 140, and histidine 178 each coordinate Zn(2+). Lysine 103 is modified (N6-carboxylysine). Substrate is bound at residue histidine 140. Residue leucine 223 coordinates substrate. Aspartate 251 contacts Zn(2+). Residue aspartate 251 is part of the active site. Residues histidine 255 and alanine 267 each coordinate substrate.

Belongs to the metallo-dependent hydrolases superfamily. DHOase family. Class II DHOase subfamily. Homodimer. It depends on Zn(2+) as a cofactor.

The catalysed reaction is (S)-dihydroorotate + H2O = N-carbamoyl-L-aspartate + H(+). Its pathway is pyrimidine metabolism; UMP biosynthesis via de novo pathway; (S)-dihydroorotate from bicarbonate: step 3/3. Catalyzes the reversible cyclization of carbamoyl aspartate to dihydroorotate. The chain is Dihydroorotase from Escherichia coli (strain UTI89 / UPEC).